A 313-amino-acid polypeptide reads, in one-letter code: uncharacterized protein (313 aa).

It to B.subtilis YqxC and T.hyodysenteriae hemolysin TlyA.

This is an uncharacterized protein from Bacillus subtilis (strain 168).